The chain runs to 427 residues: Serine hydroxymethyltransferase (427 aa).

120–122 (GHI) serves as a coordination point for (6S)-5,6,7,8-tetrahydrofolate. An N6-(pyridoxal phosphate)lysine modification is found at lysine 226.

This sequence belongs to the SHMT family. As to quaternary structure, homodimer. The cofactor is pyridoxal 5'-phosphate.

It localises to the cytoplasm. The protein operates within amino-acid biosynthesis; glycine biosynthesis; glycine from L-serine: step 1/1. Catalyzes the reversible interconversion of serine and glycine with a modified folate serving as the one-carbon carrier. Also exhibits a pteridine-independent aldolase activity toward beta-hydroxyamino acids, producing glycine and aldehydes, via a retro-aldol mechanism. The chain is Serine hydroxymethyltransferase from Pyrococcus furiosus (strain ATCC 43587 / DSM 3638 / JCM 8422 / Vc1).